Reading from the N-terminus, the 300-residue chain is Acetylglutamate kinase (300 aa).

Substrate contacts are provided by residues 73 to 74 (GG), R95, and N197.

Belongs to the acetylglutamate kinase family. ArgB subfamily.

Its subcellular location is the cytoplasm. It catalyses the reaction N-acetyl-L-glutamate + ATP = N-acetyl-L-glutamyl 5-phosphate + ADP. It participates in amino-acid biosynthesis; L-arginine biosynthesis; N(2)-acetyl-L-ornithine from L-glutamate: step 2/4. Its function is as follows. Catalyzes the ATP-dependent phosphorylation of N-acetyl-L-glutamate. This Bordetella petrii (strain ATCC BAA-461 / DSM 12804 / CCUG 43448) protein is Acetylglutamate kinase.